We begin with the raw amino-acid sequence, 206 residues long: Ribonuclease HII (206 aa).

Residues 14-206 (EFICGIDEVG…FKLRQLGEKV (193 aa)) form the RNase H type-2 domain. Residues D20, E21, and D117 each coordinate a divalent metal cation.

Belongs to the RNase HII family. Mn(2+) is required as a cofactor. The cofactor is Mg(2+).

It localises to the cytoplasm. It carries out the reaction Endonucleolytic cleavage to 5'-phosphomonoester.. Functionally, endonuclease that specifically degrades the RNA of RNA-DNA hybrids. This Chlorobium chlorochromatii (strain CaD3) protein is Ribonuclease HII.